The primary structure comprises 394 residues: ATP phosphoribosyltransferase regulatory subunit (394 aa).

Belongs to the class-II aminoacyl-tRNA synthetase family. HisZ subfamily. As to quaternary structure, heteromultimer composed of HisG and HisZ subunits.

The protein localises to the cytoplasm. Its pathway is amino-acid biosynthesis; L-histidine biosynthesis; L-histidine from 5-phospho-alpha-D-ribose 1-diphosphate: step 1/9. Its function is as follows. Required for the first step of histidine biosynthesis. May allow the feedback regulation of ATP phosphoribosyltransferase activity by histidine. This is ATP phosphoribosyltransferase regulatory subunit from Geobacillus kaustophilus (strain HTA426).